Here is a 385-residue protein sequence, read N- to C-terminus: tRNA-specific 2-thiouridylase MnmA (385 aa).

ATP-binding positions include 27–34 (AMSGGVDS) and Leu53. Cys121 serves as the catalytic Nucleophile. Cys121 and Cys217 are joined by a disulfide. Gly145 contributes to the ATP binding site. The segment at 167-169 (KDQ) is interaction with tRNA. Cys217 functions as the Cysteine persulfide intermediate in the catalytic mechanism.

Belongs to the MnmA/TRMU family.

Its subcellular location is the cytoplasm. The catalysed reaction is S-sulfanyl-L-cysteinyl-[protein] + uridine(34) in tRNA + AH2 + ATP = 2-thiouridine(34) in tRNA + L-cysteinyl-[protein] + A + AMP + diphosphate + H(+). Its function is as follows. Catalyzes the 2-thiolation of uridine at the wobble position (U34) of tRNA, leading to the formation of s(2)U34. This Sorangium cellulosum (strain So ce56) (Polyangium cellulosum (strain So ce56)) protein is tRNA-specific 2-thiouridylase MnmA.